The primary structure comprises 608 residues: MNKEEMNARQKKIRNFSIIAHIDHGKSTLADRILEQTGALTHREMKNQLLDSMDLERERGITIKLNAVQLKYKAKDGETYIFHLIDTPGHVDFTYEVSRSLAACEGAILVVDAAQGIEAQTLANVYLALDNDLEILPVINKIDLPAADPERVREEIEDVIGLDASDAVLASAKSGIGIEDILEQIVEKVPEPSGDVNKPLKALIFDSVFDAYRGVIANIRIMDGVVKAGDRIKMMSNGKEFEVTEVGVFSPKATPRDELLVGDVGYLTAAIKNVGDTRVGDTITLANNPAEEALDGYRKLNPMVYCGLYPIDSSKYNDLRDALEKLELNDSALQFEAETSQALGFGFRCGFLGLLHMEIIQERIEREFNIDLITTAPSVIYHVNLTDGSNIVVDNPAEMPEPGVIESVEEPYVKATVMVPNDYVGAVMELAQNKRGNFITMEYLDDIRVSIVYEIPLSEIVYDFFDQLKSSTKGYASFDYELIGYKASKLVKMDILLNAEKVDALSFIVHRDFAYERGKIIVEKLKELIPRQQFEVPIQAAIATKIVSRSTIKALRKNVLAKCYGGDVSRKRKLLEKQKEGKKRMKQIGSVEVPQEAFMAILKMDESK.

The region spanning 11–193 is the tr-type G domain; that stretch reads KKIRNFSIIA…QIVEKVPEPS (183 aa). GTP-binding positions include 23-28 and 140-143; these read DHGKST and NKID.

Belongs to the TRAFAC class translation factor GTPase superfamily. Classic translation factor GTPase family. LepA subfamily.

Its subcellular location is the cell membrane. The enzyme catalyses GTP + H2O = GDP + phosphate + H(+). In terms of biological role, required for accurate and efficient protein synthesis under certain stress conditions. May act as a fidelity factor of the translation reaction, by catalyzing a one-codon backward translocation of tRNAs on improperly translocated ribosomes. Back-translocation proceeds from a post-translocation (POST) complex to a pre-translocation (PRE) complex, thus giving elongation factor G a second chance to translocate the tRNAs correctly. Binds to ribosomes in a GTP-dependent manner. This Listeria monocytogenes serotype 4b (strain CLIP80459) protein is Elongation factor 4.